We begin with the raw amino-acid sequence, 755 residues long: Serine/threonine-protein kinase GA29083 (755 aa).

Positions 18–52 (QASASGSGTPKKTAASSAAAQNSKQLLDQLSQQQK) are enriched in low complexity. Positions 18-128 (QASASGSGTP…GSANTNGSAS (111 aa)) are disordered. Composition is skewed to basic and acidic residues over residues 53-66 (AQEE…RDCD) and 74-84 (EPEKDLDELRD). Over residues 87–99 (GSLTGSGSVGKSN) the composition is skewed to polar residues. A compositionally biased stretch (low complexity) spans 100-128 (GSLSGASSTTSAPAGTSTPGSANTNGSAS). Doublecortin domains lie at 157–243 (HRIK…VDYN) and 314–397 (RIVT…VEDF). A Protein kinase domain is found at 484-742 (YTLSQIIGDG…SEDILDHYWT (259 aa)). Residues 490–498 (IGDGNFAIV) and lysine 513 each bind ATP. Aspartate 605 (proton acceptor) is an active-site residue.

This sequence belongs to the protein kinase superfamily. CAMK Ser/Thr protein kinase family. CaMK subfamily.

The catalysed reaction is L-seryl-[protein] + ATP = O-phospho-L-seryl-[protein] + ADP + H(+). It catalyses the reaction L-threonyl-[protein] + ATP = O-phospho-L-threonyl-[protein] + ADP + H(+). In Drosophila pseudoobscura pseudoobscura (Fruit fly), this protein is Serine/threonine-protein kinase GA29083.